The sequence spans 201 residues: UPF0301 protein R00917 (201 aa).

The protein belongs to the UPF0301 (AlgH) family.

The sequence is that of UPF0301 protein R00917 from Rhizobium meliloti (strain 1021) (Ensifer meliloti).